The sequence spans 729 residues: Probable ATP-dependent RNA helicase DDX17 (729 aa).

The disordered stretch occupies residues 20–115 (EAATVASATG…PPKKFGNPGE (96 aa)). S64 carries the phosphoserine modification. Residues 86–95 (GDRDRDRDRG) show a composition bias toward basic and acidic residues. The span at 96-105 (GFGARGGGGL) shows a compositional bias: gly residues. N6-acetyllysine; by EP300 occurs at positions 108, 109, and 121. A Glycyl lysine isopeptide (Lys-Gly) (interchain with G-Cter in SUMO); alternate cross-link involves residue K129. A Glycyl lysine isopeptide (Lys-Gly) (interchain with G-Cter in SUMO1); alternate cross-link involves residue K129. A Glycyl lysine isopeptide (Lys-Gly) (interchain with G-Cter in SUMO2); alternate cross-link involves residue K129. Positions 171–199 (FAFHHANFPQYVMDVLMDQHFTEPTPIQC) match the Q motif motif. The 176-residue stretch at 202-377 (FPLALSGRDM…EDFLRDYTQI (176 aa)) folds into the Helicase ATP-binding domain. 215–222 (AQTGSGKT) contacts ATP. A DEAD box motif is present at residues 325-328 (DEAD). In terms of domain architecture, Helicase C-terminal spans 405 to 552 (KLIQLMEEIM…AINPKLMQLV (148 aa)). T523 is subject to Phosphothreonine. K528 is covalently cross-linked (Glycyl lysine isopeptide (Lys-Gly) (interchain with G-Cter in SUMO2)). The interval 547-729 (KLMQLVDHRG…PPPPPPPSRK (183 aa)) is transactivation domain. Disordered stretches follow at residues 551 to 623 (LVDH…GSPN) and 659 to 729 (TYGA…PSRK). A compositionally biased stretch (polar residues) spans 568–578 (RTTSSANNPNL). A compositionally biased stretch (basic and acidic residues) spans 583-610 (ECDRRLRGVKDGGRRDSASYRDRSETDR). The span at 659 to 688 (TYGASSTTSTGRSSQSSSQQFSGIGRSGQQ) shows a compositional bias: low complexity. R684 is modified (omega-N-methylarginine). A compositionally biased stretch (polar residues) spans 689-698 (PQPLMSQQFA). Over residues 717 to 729 (YPPPPPPPPPSRK) the composition is skewed to pro residues. The interaction with YAP1 stretch occupies residues 718 to 726 (PPPPPPPPP).

The protein belongs to the DEAD box helicase family. DDX5/DBP2 subfamily. Interacts with DDX5 in an RNA-independent manner. Interacts with CDK9 transcription elongation complex under basal conditions. Following cell stimulation with poly(I:C), a synthetic double-stranded RNA mimicking viral infection, the interaction with CDK9 is decreased. Interacts with ESR1 in an estrogen-independent manner. Interacts with HNRNPH1; this interaction is important for the regulation of alternative splicing on G-quadruplex structures. At high, but not low, cell density, interacts with DROSHA and DGCR8, the core components of the microprocessor complex involved in the maturation of primary microRNAs (pri-miRNAs) into pre-miRNAs. The interaction with DGCR8 is reduced during mitosis. At low, but not high, cell density, interacts with YAP1 and with its paralog, WWTR1/TAZ. Interactions with DROSHA and YAP1 are mutually exclusive. In vitro, the pre-miRNA processing activity of the DDX17-containing microprocessor complex is weaker than that of the DROSHA/DGCR8 microprocessor complex devoid of DDX17. Interacts with UPF3B. Interacts with NFAT5; this interaction leads to DDX17 recruitment to LNC2 and S100A4 promoters and NFAT5-mediated DDX17-enhanced transactivation. Interacts with HDAC1, HDAC2 and HDAC3; this interaction with HDAC1 and HDAC3, but not HDAC2, depends upon DDX17 acetylation. Interacts with ZC3HAV1 (via N-terminal domain) in an RNA-independent manner. Interacts with EXOSC3/RRP40 and EXOSC5/RRP46; this interaction may be indirect and mediated by ZC3HAV1-binding. Interacts with EP300; this interaction leads to acetylation at lysine residues. Interacts with CREBBP/CBP and KAT2B/P/CAF. Directly interacts with CTNNB1. Interacts with MYOD1. Interacts with TP53. Interacts with DCP1A in an RNA-independent manner. Interacts with DCP2 in an RNA-dependent manner. Interacts with DHX36; this interaction occurs in a RNA-dependent manner. Interacts with ERCC6. In terms of processing, sumoylation significantly increases stability. It also promotes interaction specifically with HDAC1 (but not HDAC2, nor HDAC3) and strongly stimulates ESR1 and TP53 coactivation. Acetylation at lysine residues stabilizes the protein, stimulates interaction with HDAC1 and HDAC3, but not HDAC2, and represses ESR1 and TP53 coactivation activity. In terms of tissue distribution, widely expressed. Low expression, if any, in normal colonic epithelial cells (at protein level). Levels tend to increase during colon cancer progression, from very low in benign hyperplastic polyps to very high in tubular and villous adenomas.

The protein localises to the nucleus. Its subcellular location is the nucleolus. The protein resides in the cytoplasm. It localises to the cytosol. The enzyme catalyses ATP + H2O = ADP + phosphate + H(+). Its function is as follows. As an RNA helicase, unwinds RNA and alters RNA structures through ATP binding and hydrolysis. Involved in multiple cellular processes, including pre-mRNA splicing, alternative splicing, ribosomal RNA processing and miRNA processing, as well as transcription regulation. Regulates the alternative splicing of exons exhibiting specific features. For instance, promotes the inclusion of AC-rich alternative exons in CD44 transcripts. This function requires the RNA helicase activity. Affects NFAT5 and histone macro-H2A.1/MACROH2A1 alternative splicing in a CDK9-dependent manner. In NFAT5, promotes the introduction of alternative exon 4, which contains 2 stop codons and may target NFAT5 exon 4-containing transcripts to nonsense-mediated mRNA decay, leading to the down-regulation of NFAT5 protein. Affects splicing of mediators of steroid hormone signaling pathway, including kinases that phosphorylates ESR1, such as CDK2, MAPK1 and GSK3B, and transcriptional regulators, such as CREBBP, MED1, NCOR1 and NCOR2. By affecting GSK3B splicing, participates in ESR1 and AR stabilization. In myoblasts and epithelial cells, cooperates with HNRNPH1 to control the splicing of specific subsets of exons. In addition to binding mature mRNAs, also interacts with certain pri-microRNAs, including MIR663/miR-663a, MIR99B/miR-99b, and MIR6087/miR-6087. Binds pri-microRNAs on the 3' segment flanking the stem loop via the 5'-[ACG]CAUC[ACU]-3' consensus sequence. Required for the production of subsets of microRNAs, including MIR21 and MIR125B1. May be involved not only in microRNA primary transcript processing, but also stabilization. Participates in MYC down-regulation at high cell density through the production of MYC-targeting microRNAs. Along with DDX5, may be involved in the processing of the 32S intermediate into the mature 28S ribosomal RNA. Promoter-specific transcription regulator, functioning as a coactivator or corepressor depending on the context of the promoter and the transcriptional complex in which it exists. Enhances NFAT5 transcriptional activity. Synergizes with TP53 in the activation of the MDM2 promoter; this activity requires acetylation on lysine residues. May also coactivate MDM2 transcription through a TP53-independent pathway. Coactivates MMP7 transcription. Along with CTNNB1, coactivates MYC, JUN, FOSL1 and cyclin D1/CCND1 transcription. Alone or in combination with DDX5 and/or SRA1 non-coding RNA, plays a critical role in promoting the assembly of proteins required for the formation of the transcription initiation complex and chromatin remodeling leading to coactivation of MYOD1-dependent transcription. This helicase-independent activity is required for skeletal muscle cells to properly differentiate into myotubes. During epithelial-to-mesenchymal transition, coregulates SMAD-dependent transcriptional activity, directly controlling key effectors of differentiation, including miRNAs which in turn directly repress its expression. Plays a role in estrogen and testosterone signaling pathway at several levels. Mediates the use of alternative promoters in estrogen-responsive genes and regulates transcription and splicing of a large number of steroid hormone target genes. Contrary to splicing regulation activity, transcriptional coregulation of the estrogen receptor ESR1 is helicase-independent. Plays a role in innate immunity. Specifically restricts bunyavirus infection, including Rift Valley fever virus (RVFV) or La Crosse virus (LACV), but not vesicular stomatitis virus (VSV), in an interferon- and DROSHA-independent manner. Binds to RVFV RNA, likely via structured viral RNA elements. Promotes mRNA degradation mediated by the antiviral zinc-finger protein ZC3HAV1, in an ATPase-dependent manner. This is Probable ATP-dependent RNA helicase DDX17 (DDX17) from Homo sapiens (Human).